A 191-amino-acid polypeptide reads, in one-letter code: Protein GrpE (191 aa).

It belongs to the GrpE family. Homodimer.

The protein resides in the cytoplasm. Its function is as follows. Participates actively in the response to hyperosmotic and heat shock by preventing the aggregation of stress-denatured proteins, in association with DnaK and GrpE. It is the nucleotide exchange factor for DnaK and may function as a thermosensor. Unfolded proteins bind initially to DnaJ; upon interaction with the DnaJ-bound protein, DnaK hydrolyzes its bound ATP, resulting in the formation of a stable complex. GrpE releases ADP from DnaK; ATP binding to DnaK triggers the release of the substrate protein, thus completing the reaction cycle. Several rounds of ATP-dependent interactions between DnaJ, DnaK and GrpE are required for fully efficient folding. This is Protein GrpE from Nitratidesulfovibrio vulgaris (strain ATCC 29579 / DSM 644 / CCUG 34227 / NCIMB 8303 / VKM B-1760 / Hildenborough) (Desulfovibrio vulgaris).